A 353-amino-acid chain; its full sequence is ATP-dependent kinase YFH7 (353 aa).

An ATP-binding site is contributed by 31 to 39 (GSPGSGKST).

It belongs to the YFH7 family.

Its function is as follows. ATP-dependent kinase that could be involved in endoplasmic reticulum membrane assembly. The protein is ATP-dependent kinase YFH7 (YFH7) of Saccharomyces cerevisiae (strain RM11-1a) (Baker's yeast).